Here is a 638-residue protein sequence, read N- to C-terminus: 1-deoxy-D-xylulose-5-phosphate synthase (638 aa).

Thiamine diphosphate-binding positions include His75 and 116–118; that span reads AHS. Asp147 lines the Mg(2+) pocket. Residues 148-149, Asn177, Tyr288, and Glu370 contribute to the thiamine diphosphate site; that span reads GA. A Mg(2+)-binding site is contributed by Asn177.

This sequence belongs to the transketolase family. DXPS subfamily. As to quaternary structure, homodimer. Mg(2+) is required as a cofactor. Thiamine diphosphate serves as cofactor.

The enzyme catalyses D-glyceraldehyde 3-phosphate + pyruvate + H(+) = 1-deoxy-D-xylulose 5-phosphate + CO2. It functions in the pathway metabolic intermediate biosynthesis; 1-deoxy-D-xylulose 5-phosphate biosynthesis; 1-deoxy-D-xylulose 5-phosphate from D-glyceraldehyde 3-phosphate and pyruvate: step 1/1. Functionally, catalyzes the acyloin condensation reaction between C atoms 2 and 3 of pyruvate and glyceraldehyde 3-phosphate to yield 1-deoxy-D-xylulose-5-phosphate (DXP). This is 1-deoxy-D-xylulose-5-phosphate synthase from Cupriavidus taiwanensis (strain DSM 17343 / BCRC 17206 / CCUG 44338 / CIP 107171 / LMG 19424 / R1) (Ralstonia taiwanensis (strain LMG 19424)).